The following is a 340-amino-acid chain: MLKRKLGPEDLRRLETPAIERESHGQTSAKSSVPDSASTVAVDFAGVTKSYGNKIVVDELSFSVASGECFGLLGPNGAGKSTIARMLLGMTCPDAGTITVLGVPVPARARLARRGIGVVPQFDNLDQEFTVRENLLVFGRYFGMSTRQSEAVIPSLLEFARLERKADARVSELSGGMKRCLTMARALINDPQLIVMDEPTTGLDPHARHLIWERLRALLARGKTIILTTHFMEEAERLCDRLCVLEKGRNIAEGGPQALIDEHIGCQVMEIYGGDPHELLSLVKPHSQRIEVSGETLYCYAPDPDQVRTQLQGRAGLRLLLRPANLEDVFLRLTGREMEE.

Positions 1-24 (MLKRKLGPEDLRRLETPAIERESH) are enriched in basic and acidic residues. Positions 1–34 (MLKRKLGPEDLRRLETPAIERESHGQTSAKSSVP) are disordered. Over residues 25 to 34 (GQTSAKSSVP) the composition is skewed to polar residues. One can recognise an ABC transporter domain in the interval 42 to 272 (VDFAGVTKSY…HIGCQVMEIY (231 aa)). 74–81 (GPNGAGKS) contacts ATP.

It belongs to the ABC transporter superfamily. Lipooligosaccharide exporter (TC 3.A.1.102) family. In terms of assembly, the complex is composed of two ATP-binding proteins (NodI) and two transmembrane proteins (NodJ).

The protein localises to the cell inner membrane. Its function is as follows. Part of the ABC transporter complex NodIJ involved in the export of the nodulation factors (Nod factors), the bacterial signal molecules that induce symbiosis and subsequent nodulation induction. Nod factors are LCO (lipo-chitin oligosaccharide), a modified beta-1,4-linked N-acetylglucosamine oligosaccharide. This subunit is responsible for energy coupling to the transport system. The chain is Nod factor export ATP-binding protein I from Mesorhizobium japonicum (strain LMG 29417 / CECT 9101 / MAFF 303099) (Mesorhizobium loti (strain MAFF 303099)).